The chain runs to 644 residues: Major core protein OPG129 (644 aa).

Positions 1–61 (MEAVVNSDVF…IVDDDFISAG (61 aa)) are excised as a propeptide. Residues 61-80 (GARNQRTKPKRAGNDQAQQT) are disordered.

It belongs to the orthopoxvirus OPG129 family. Post-translationally, the 73-kDa precursor is cleaved to a mature protein of 60 kDa during virion maturation. Proteolytic cleavage of major core proteins OPG129, OPG136, and OPG098, which occurs at a late stage of core formation, is required for production of infectious mature virions (MV).

The protein resides in the virion. Functionally, major component of the virion core that undergoes proteolytic processing during the immature virion (IV) to mature virion (MV) transition. Essential for the formation of a structurally normal core. This is Major core protein OPG129 (OPG129) from Variola virus (isolate Human/India/Ind3/1967) (VARV).